The sequence spans 213 residues: ATP phosphoribosyltransferase (213 aa).

Belongs to the ATP phosphoribosyltransferase family. Short subfamily. In terms of assembly, heteromultimer composed of HisG and HisZ subunits.

It is found in the cytoplasm. The enzyme catalyses 1-(5-phospho-beta-D-ribosyl)-ATP + diphosphate = 5-phospho-alpha-D-ribose 1-diphosphate + ATP. Its pathway is amino-acid biosynthesis; L-histidine biosynthesis; L-histidine from 5-phospho-alpha-D-ribose 1-diphosphate: step 1/9. Its function is as follows. Catalyzes the condensation of ATP and 5-phosphoribose 1-diphosphate to form N'-(5'-phosphoribosyl)-ATP (PR-ATP). Has a crucial role in the pathway because the rate of histidine biosynthesis seems to be controlled primarily by regulation of HisG enzymatic activity. This chain is ATP phosphoribosyltransferase, found in Synechococcus sp. (strain RCC307).